A 373-amino-acid chain; its full sequence is Phosphoserine aminotransferase (373 aa).

Arg47 provides a ligand contact to L-glutamate. Residues 81–82, Trp113, Thr164, Asp185, and Gln208 contribute to the pyridoxal 5'-phosphate site; that span reads AR. Lys209 is modified (N6-(pyridoxal phosphate)lysine). 250–251 contributes to the pyridoxal 5'-phosphate binding site; the sequence is NT.

It belongs to the class-V pyridoxal-phosphate-dependent aminotransferase family. SerC subfamily. As to quaternary structure, homodimer. Pyridoxal 5'-phosphate serves as cofactor.

Its subcellular location is the cytoplasm. It catalyses the reaction O-phospho-L-serine + 2-oxoglutarate = 3-phosphooxypyruvate + L-glutamate. The catalysed reaction is 4-(phosphooxy)-L-threonine + 2-oxoglutarate = (R)-3-hydroxy-2-oxo-4-phosphooxybutanoate + L-glutamate. It functions in the pathway amino-acid biosynthesis; L-serine biosynthesis; L-serine from 3-phospho-D-glycerate: step 2/3. The protein operates within cofactor biosynthesis; pyridoxine 5'-phosphate biosynthesis; pyridoxine 5'-phosphate from D-erythrose 4-phosphate: step 3/5. Its function is as follows. Catalyzes the reversible conversion of 3-phosphohydroxypyruvate to phosphoserine and of 3-hydroxy-2-oxo-4-phosphonooxybutanoate to phosphohydroxythreonine. In Buchnera aphidicola subsp. Baizongia pistaciae (strain Bp), this protein is Phosphoserine aminotransferase.